Consider the following 143-residue polypeptide: uncharacterized protein (143 aa).

The active site involves Cys-12.

This sequence belongs to the ArsC family.

This is an uncharacterized protein from Rhodospirillum rubrum.